Reading from the N-terminus, the 270-residue chain is Dermonecrotic toxin LsaSicTox-alphaIB1av (270 aa).

The active site involves histidine 2. Residues glutamate 22 and aspartate 24 each coordinate Mg(2+). Histidine 38 acts as the Nucleophile in catalysis. 2 cysteine pairs are disulfide-bonded: cysteine 42–cysteine 48 and cysteine 44–cysteine 187. Residue aspartate 82 participates in Mg(2+) binding.

This sequence belongs to the arthropod phospholipase D family. Class II subfamily. Mg(2+) serves as cofactor. Expressed by the venom gland.

It is found in the secreted. The catalysed reaction is an N-(acyl)-sphingosylphosphocholine = an N-(acyl)-sphingosyl-1,3-cyclic phosphate + choline. The enzyme catalyses an N-(acyl)-sphingosylphosphoethanolamine = an N-(acyl)-sphingosyl-1,3-cyclic phosphate + ethanolamine. It carries out the reaction a 1-acyl-sn-glycero-3-phosphocholine = a 1-acyl-sn-glycero-2,3-cyclic phosphate + choline. It catalyses the reaction a 1-acyl-sn-glycero-3-phosphoethanolamine = a 1-acyl-sn-glycero-2,3-cyclic phosphate + ethanolamine. In terms of biological role, dermonecrotic toxins cleave the phosphodiester linkage between the phosphate and headgroup of certain phospholipids (sphingolipid and lysolipid substrates), forming an alcohol (often choline) and a cyclic phosphate. This toxin acts on sphingomyelin (SM). It may also act on ceramide phosphoethanolamine (CPE), lysophosphatidylcholine (LPC) and lysophosphatidylethanolamine (LPE), but not on lysophosphatidylserine (LPS), and lysophosphatidylglycerol (LPG). It acts by transphosphatidylation, releasing exclusively cyclic phosphate products as second products. Induces dermonecrosis, hemolysis, increased vascular permeability, edema, inflammatory response, and platelet aggregation. In Loxosceles sabina (Tucson recluse spider), this protein is Dermonecrotic toxin LsaSicTox-alphaIB1av.